We begin with the raw amino-acid sequence, 165 residues long: Ribosome maturation factor RimM (165 aa).

The region spanning 90–161 (PDTYYVSDLK…KIIIKPVGEW (72 aa)) is the PRC barrel domain.

This sequence belongs to the RimM family. In terms of assembly, binds ribosomal protein uS19.

Its subcellular location is the cytoplasm. An accessory protein needed during the final step in the assembly of 30S ribosomal subunit, possibly for assembly of the head region. Essential for efficient processing of 16S rRNA. May be needed both before and after RbfA during the maturation of 16S rRNA. It has affinity for free ribosomal 30S subunits but not for 70S ribosomes. This is Ribosome maturation factor RimM from Clostridium beijerinckii (strain ATCC 51743 / NCIMB 8052) (Clostridium acetobutylicum).